A 57-amino-acid chain; its full sequence is Large ribosomal subunit protein bL32c (57 aa).

The protein belongs to the bacterial ribosomal protein bL32 family.

Its subcellular location is the plastid. It localises to the chloroplast. This is Large ribosomal subunit protein bL32c from Amborella trichopoda.